We begin with the raw amino-acid sequence, 229 residues long: Uracil-DNA glycosylase (229 aa).

Aspartate 67 serves as the catalytic Proton acceptor.

Belongs to the uracil-DNA glycosylase (UDG) superfamily. UNG family.

The protein resides in the cytoplasm. The enzyme catalyses Hydrolyzes single-stranded DNA or mismatched double-stranded DNA and polynucleotides, releasing free uracil.. In terms of biological role, excises uracil residues from the DNA which can arise as a result of misincorporation of dUMP residues by DNA polymerase or due to deamination of cytosine. The chain is Uracil-DNA glycosylase from Coxiella burnetii (strain CbuG_Q212) (Coxiella burnetii (strain Q212)).